Reading from the N-terminus, the 346-residue chain is Phenylalanine--tRNA ligase alpha subunit (346 aa).

Position 260 (E260) interacts with Mg(2+).

The protein belongs to the class-II aminoacyl-tRNA synthetase family. Phe-tRNA synthetase alpha subunit type 1 subfamily. Tetramer of two alpha and two beta subunits. Requires Mg(2+) as cofactor.

It localises to the cytoplasm. The catalysed reaction is tRNA(Phe) + L-phenylalanine + ATP = L-phenylalanyl-tRNA(Phe) + AMP + diphosphate + H(+). The polypeptide is Phenylalanine--tRNA ligase alpha subunit (Herpetosiphon aurantiacus (strain ATCC 23779 / DSM 785 / 114-95)).